A 91-amino-acid polypeptide reads, in one-letter code: Probable Fe(2+)-trafficking protein (91 aa).

It belongs to the Fe(2+)-trafficking protein family.

Could be a mediator in iron transactions between iron acquisition and iron-requiring processes, such as synthesis and/or repair of Fe-S clusters in biosynthetic enzymes. The sequence is that of Probable Fe(2+)-trafficking protein from Polynucleobacter necessarius subsp. necessarius (strain STIR1).